The primary structure comprises 134 residues: T-cell receptor alpha chain V region RL-5 (134 aa).

Residues 1-20 (MFSASCSVTVVVLLITVRRT) form the signal peptide. The v segment stretch occupies residues 21–114 (NGASVTQTEG…DSAVYYCALR (94 aa)). The j segment stretch occupies residues 115 to 134 (RGASNKLTLGTGTLLKVELN). N134 carries an N-linked (GlcNAc...) asparagine glycan.

In terms of processing, rearrangement with the C region would elongate the sequence with Ile-Thr-; which creates a potential N-glycosylation site at Asn-134.

The chain is T-cell receptor alpha chain V region RL-5 from Oryctolagus cuniculus (Rabbit).